The primary structure comprises 364 residues: Programmed cell death protein 2-like (364 aa).

The residue at position 2 (Ala-2) is an N-acetylalanine. Residues 125-150 (EGSQDWGSDTEETPPPPASDLGSDSN) are disordered.

Over-expression suppresses AP1, CREB, NFAT, and NF-kB transcriptional activation, and delays cell cycle progression at S phase. The chain is Programmed cell death protein 2-like (Pdcd2l) from Mus musculus (Mouse).